The following is a 331-amino-acid chain: D-lactate/D-glycerate dehydrogenase (331 aa).

NAD(+) is bound by residues 154–155 (RI), Asp-174, 205–206 (VP), Asn-211, 232–234 (FAR), and Asp-258. Arg-234 is a catalytic residue. The active site involves Glu-263. His-295 acts as the Proton donor in catalysis.

The protein belongs to the D-isomer specific 2-hydroxyacid dehydrogenase family. In terms of assembly, homodimer.

The catalysed reaction is (R)-lactate + NAD(+) = pyruvate + NADH + H(+). The enzyme catalyses (R)-glycerate + NAD(+) = 3-hydroxypyruvate + NADH + H(+). In terms of biological role, has both D-lactate and D-glycerate dehydrogenase activities. Equally active on pyruvate and hydroxypyruvate. This Pediococcus acidilactici protein is D-lactate/D-glycerate dehydrogenase.